We begin with the raw amino-acid sequence, 778 residues long: Ribosome biogenesis protein BOP1 homolog (778 aa).

Over residues 1-10 (MAKKQDRKRK) the composition is skewed to basic residues. The tract at residues 1 to 152 (MAKKQDRKRK…DSDTSDEEDI (152 aa)) is disordered. Acidic residues-rich tracts occupy residues 44–53 (EDSTDDEGID), 60–72 (SSED…DEEG), and 84–105 (SSDE…DEEE). Positions 114-124 (TTSSKAETNNE) are enriched in polar residues. A compositionally biased stretch (acidic residues) spans 142–151 (EDSDTSDEED). WD repeat units lie at residues 438–479 (GHTD…RTIE), 481–519 (EDVV…KLLI), 564–606 (NHFK…SQIP), 609–647 (KSKG…LIKK), 650–689 (TNSK…KPYQ), 693–732 (LHRN…DLLQ), and 748–778 (RDDF…RLYT).

Belongs to the WD repeat BOP1/ERB1 family.

The protein localises to the nucleus. Its subcellular location is the nucleolus. It localises to the nucleoplasm. Its function is as follows. Required for maturation of ribosomal RNAs and formation of the large ribosomal subunit. This chain is Ribosome biogenesis protein BOP1 homolog, found in Drosophila willistoni (Fruit fly).